The following is a 218-amino-acid chain: Pyridoxine/pyridoxamine 5'-phosphate oxidase (218 aa).

Residues 11-14 (RVEY) and K75 each bind substrate. FMN-binding positions include 70 to 75 (RTVLCK), 85 to 86 (YT), K92, and Q114. Substrate contacts are provided by Y132, R136, and S140. Residues 149-150 (QS) and W195 each bind FMN. Residue 201 to 203 (RVH) participates in substrate binding. R205 contacts FMN.

It belongs to the pyridoxamine 5'-phosphate oxidase family. Homodimer. FMN serves as cofactor.

The catalysed reaction is pyridoxamine 5'-phosphate + O2 + H2O = pyridoxal 5'-phosphate + H2O2 + NH4(+). The enzyme catalyses pyridoxine 5'-phosphate + O2 = pyridoxal 5'-phosphate + H2O2. It participates in cofactor metabolism; pyridoxal 5'-phosphate salvage; pyridoxal 5'-phosphate from pyridoxamine 5'-phosphate: step 1/1. Its pathway is cofactor metabolism; pyridoxal 5'-phosphate salvage; pyridoxal 5'-phosphate from pyridoxine 5'-phosphate: step 1/1. Catalyzes the oxidation of either pyridoxine 5'-phosphate (PNP) or pyridoxamine 5'-phosphate (PMP) into pyridoxal 5'-phosphate (PLP). The sequence is that of Pyridoxine/pyridoxamine 5'-phosphate oxidase from Mycolicibacterium gilvum (strain PYR-GCK) (Mycobacterium gilvum (strain PYR-GCK)).